We begin with the raw amino-acid sequence, 271 residues long: Pyrroline-5-carboxylate reductase (271 aa).

Belongs to the pyrroline-5-carboxylate reductase family.

Its subcellular location is the cytoplasm. It catalyses the reaction L-proline + NADP(+) = (S)-1-pyrroline-5-carboxylate + NADPH + 2 H(+). The catalysed reaction is L-proline + NAD(+) = (S)-1-pyrroline-5-carboxylate + NADH + 2 H(+). Its pathway is amino-acid biosynthesis; L-proline biosynthesis; L-proline from L-glutamate 5-semialdehyde: step 1/1. In terms of biological role, catalyzes the reduction of 1-pyrroline-5-carboxylate (PCA) to L-proline. In Staphylococcus aureus (strain COL), this protein is Pyrroline-5-carboxylate reductase.